The chain runs to 276 residues: Large ribosomal subunit protein uL2 (276 aa).

2 disordered regions span residues 29 to 55 and 219 to 276; these read PEKS…RHRG and HVRG…RRTR. The segment covering 259 to 276 has biased composition (basic residues); the sequence is TRNKKKQSSKLIVRRRTR.

The protein belongs to the universal ribosomal protein uL2 family. Part of the 50S ribosomal subunit. Forms a bridge to the 30S subunit in the 70S ribosome.

One of the primary rRNA binding proteins. Required for association of the 30S and 50S subunits to form the 70S ribosome, for tRNA binding and peptide bond formation. It has been suggested to have peptidyltransferase activity; this is somewhat controversial. Makes several contacts with the 16S rRNA in the 70S ribosome. The protein is Large ribosomal subunit protein uL2 of Rippkaea orientalis (strain PCC 8801 / RF-1) (Cyanothece sp. (strain PCC 8801)).